We begin with the raw amino-acid sequence, 375 residues long: Chaperone protein DnaJ (375 aa).

In terms of domain architecture, J spans 5-70; that stretch reads DYYEVLGVSR…EKRARYDRFG (66 aa). The segment at 136–214 adopts a CR-type zinc-finger fold; the sequence is GDEVTLRIPK…CRGAGQVQDI (79 aa). Cys149, Cys152, Cys166, Cys169, Cys188, Cys191, Cys202, and Cys205 together coordinate Zn(2+). CXXCXGXG motif repeat units lie at residues 149 to 156, 166 to 173, 188 to 195, and 202 to 209; these read CPDCSGSG, CPQCGGSG, CSACRGEG, and CPRCRGAG.

This sequence belongs to the DnaJ family. In terms of assembly, homodimer. The cofactor is Zn(2+).

The protein localises to the cytoplasm. Functionally, participates actively in the response to hyperosmotic and heat shock by preventing the aggregation of stress-denatured proteins and by disaggregating proteins, also in an autonomous, DnaK-independent fashion. Unfolded proteins bind initially to DnaJ; upon interaction with the DnaJ-bound protein, DnaK hydrolyzes its bound ATP, resulting in the formation of a stable complex. GrpE releases ADP from DnaK; ATP binding to DnaK triggers the release of the substrate protein, thus completing the reaction cycle. Several rounds of ATP-dependent interactions between DnaJ, DnaK and GrpE are required for fully efficient folding. Also involved, together with DnaK and GrpE, in the DNA replication of plasmids through activation of initiation proteins. The chain is Chaperone protein DnaJ from Oleidesulfovibrio alaskensis (strain ATCC BAA-1058 / DSM 17464 / G20) (Desulfovibrio alaskensis).